Reading from the N-terminus, the 255-residue chain is Geranylgeranylglyceryl phosphate synthase (255 aa).

Asp-25 and Ser-54 together coordinate Mg(2+). Sn-glycerol 1-phosphate contacts are provided by residues 173–179, 203–204, and 225–226; these read YLEGGSG, GG, and GT.

Belongs to the GGGP/HepGP synthase family. Group II subfamily. Requires Mg(2+) as cofactor.

It is found in the cytoplasm. The catalysed reaction is sn-glycerol 1-phosphate + (2E,6E,10E)-geranylgeranyl diphosphate = sn-3-O-(geranylgeranyl)glycerol 1-phosphate + diphosphate. The protein operates within membrane lipid metabolism; glycerophospholipid metabolism. Its function is as follows. Prenyltransferase that catalyzes the transfer of the geranylgeranyl moiety of geranylgeranyl diphosphate (GGPP) to the C3 hydroxyl of sn-glycerol-1-phosphate (G1P). This reaction is the first ether-bond-formation step in the biosynthesis of archaeal membrane lipids. The sequence is that of Geranylgeranylglyceryl phosphate synthase from Thermofilum pendens (strain DSM 2475 / Hrk 5).